Here is a 282-residue protein sequence, read N- to C-terminus: uncharacterized protein (282 aa).

Disordered regions lie at residues 1-45 (MPLE…EEDE) and 201-259 (DRRR…KPWG). The segment covering 10-19 (SEMKEFKEST) has biased composition (basic and acidic residues). A compositionally biased stretch (polar residues) spans 26–38 (SVSSEETLTQSMV). Positions 201 to 237 (DRRRKEDSKARSRLTRREEHSEHHRSGKSRRERERRS) are enriched in basic and acidic residues.

This is an uncharacterized protein from Ostreid herpesvirus 1 (isolate France) (OsHV-1).